Consider the following 407-residue polypeptide: Glucose-1-phosphate adenylyltransferase 2 (407 aa).

Alpha-D-glucose 1-phosphate-binding positions include Tyr-97, Gly-162, 177 to 178 (EK), and Ser-195.

This sequence belongs to the bacterial/plant glucose-1-phosphate adenylyltransferase family. In terms of assembly, homotetramer.

It carries out the reaction alpha-D-glucose 1-phosphate + ATP + H(+) = ADP-alpha-D-glucose + diphosphate. Its pathway is glycan biosynthesis; glycogen biosynthesis. Functionally, involved in the biosynthesis of ADP-glucose, a building block required for the elongation reactions to produce glycogen. Catalyzes the reaction between ATP and alpha-D-glucose 1-phosphate (G1P) to produce pyrophosphate and ADP-Glc. The sequence is that of Glucose-1-phosphate adenylyltransferase 2 from Vibrio cholerae serotype O1 (strain ATCC 39315 / El Tor Inaba N16961).